We begin with the raw amino-acid sequence, 334 residues long: Probable fructose-bisphosphate aldolase class 1 (334 aa).

The protein belongs to the class I fructose-bisphosphate aldolase family.

The catalysed reaction is beta-D-fructose 1,6-bisphosphate = D-glyceraldehyde 3-phosphate + dihydroxyacetone phosphate. The protein operates within carbohydrate degradation; glycolysis; D-glyceraldehyde 3-phosphate and glycerone phosphate from D-glucose: step 4/4. The polypeptide is Probable fructose-bisphosphate aldolase class 1 (Xanthomonas axonopodis pv. citri (strain 306)).